Reading from the N-terminus, the 93-residue chain is YcgL domain-containing protein VFMJ11_1829 (93 aa).

The YcgL domain maps to 1 to 84 (MFCSIYKSTK…PPENLLEKYK (84 aa)).

The protein is YcgL domain-containing protein VFMJ11_1829 of Aliivibrio fischeri (strain MJ11) (Vibrio fischeri).